A 297-amino-acid chain; its full sequence is MTHASALGLTQHIPDTQSERDERHLAIQRVGVKEVRYPLTVRIGEQLSPTVASWSLDVALPAEQKGTHMSRFVAWLDALSASGKPLDATALRDELAVMLDKLHAVEGRIEARFPFFIRKHAPVSGVSSLLDYQGAWIAEHRAGSGTTVWCEVVVPVKSLCPCSKEISDYGAHNQRSHVTIRAELMEPPGDRRRPPPPGGGESTRERPVVDSAVELGFEALVRFAEASASSEIWGLLKRPDEKWITERAYENPKFVEDLVRDVALRLNADARIGRYRVEVENFESIHNHSAFAVIERE.

Disordered stretches follow at residues 1-21 (MTHASALGLTQHIPDTQSERD) and 180-207 (IRAELMEPPGDRRRPPPPGGGESTRERP).

Belongs to the GTP cyclohydrolase IV family.

It carries out the reaction GTP + H2O = 7,8-dihydroneopterin 3'-triphosphate + formate + H(+). Its pathway is cofactor biosynthesis; 7,8-dihydroneopterin triphosphate biosynthesis; 7,8-dihydroneopterin triphosphate from GTP: step 1/1. In terms of biological role, converts GTP to 7,8-dihydroneopterin triphosphate. This Methylibium petroleiphilum (strain ATCC BAA-1232 / LMG 22953 / PM1) protein is GTP cyclohydrolase FolE2.